The sequence spans 66 residues: uncharacterized protein (66 aa).

This is an uncharacterized protein from Enterobacteria phage T4 (Bacteriophage T4).